We begin with the raw amino-acid sequence, 462 residues long: Glutamate--tRNA ligase 2 (462 aa).

Positions 8-18 match the 'HIGH' region motif; it reads PSPTGYLHIGG. Positions 236-240 match the 'KMSKS' region motif; it reads KLSKR. Residue Lys239 coordinates ATP.

This sequence belongs to the class-I aminoacyl-tRNA synthetase family. Glutamate--tRNA ligase type 1 subfamily. Monomer.

The protein resides in the cytoplasm. The enzyme catalyses tRNA(Glu) + L-glutamate + ATP = L-glutamyl-tRNA(Glu) + AMP + diphosphate. Its function is as follows. Catalyzes the attachment of glutamate to tRNA(Glu) in a two-step reaction: glutamate is first activated by ATP to form Glu-AMP and then transferred to the acceptor end of tRNA(Glu). In Nitratiruptor sp. (strain SB155-2), this protein is Glutamate--tRNA ligase 2.